A 570-amino-acid chain; its full sequence is Urease subunit alpha (570 aa).

Positions 135-570 (GGLDIHIHFN…ELPLAKRYSL (436 aa)) constitute a Urease domain. Histidine 140, histidine 142, and lysine 219 together coordinate Ni(2+). Position 219 is an N6-carboxylysine (lysine 219). A substrate-binding site is contributed by histidine 221. Ni(2+) contacts are provided by histidine 248 and histidine 274. Histidine 322 acts as the Proton donor in catalysis. A Ni(2+)-binding site is contributed by aspartate 362.

Belongs to the metallo-dependent hydrolases superfamily. Urease alpha subunit family. In terms of assembly, heterotrimer of UreA (gamma), UreB (beta) and UreC (alpha) subunits. Three heterotrimers associate to form the active enzyme. Ni cation serves as cofactor. In terms of processing, carboxylation allows a single lysine to coordinate two nickel ions.

The protein localises to the cytoplasm. It catalyses the reaction urea + 2 H2O + H(+) = hydrogencarbonate + 2 NH4(+). It participates in nitrogen metabolism; urea degradation; CO(2) and NH(3) from urea (urease route): step 1/1. The sequence is that of Urease subunit alpha from Haloquadratum walsbyi (strain DSM 16790 / HBSQ001).